The chain runs to 529 residues: Bifunctional purine biosynthesis protein PurH (529 aa).

In terms of domain architecture, MGS-like spans 1-148 (MQQRRPVRRA…KNHKDVAIVV (148 aa)).

Belongs to the PurH family.

It carries out the reaction (6R)-10-formyltetrahydrofolate + 5-amino-1-(5-phospho-beta-D-ribosyl)imidazole-4-carboxamide = 5-formamido-1-(5-phospho-D-ribosyl)imidazole-4-carboxamide + (6S)-5,6,7,8-tetrahydrofolate. It catalyses the reaction IMP + H2O = 5-formamido-1-(5-phospho-D-ribosyl)imidazole-4-carboxamide. It participates in purine metabolism; IMP biosynthesis via de novo pathway; 5-formamido-1-(5-phospho-D-ribosyl)imidazole-4-carboxamide from 5-amino-1-(5-phospho-D-ribosyl)imidazole-4-carboxamide (10-formyl THF route): step 1/1. It functions in the pathway purine metabolism; IMP biosynthesis via de novo pathway; IMP from 5-formamido-1-(5-phospho-D-ribosyl)imidazole-4-carboxamide: step 1/1. The polypeptide is Bifunctional purine biosynthesis protein PurH (Salmonella paratyphi A (strain ATCC 9150 / SARB42)).